The sequence spans 862 residues: Probable disease resistance protein At5g43740 (862 aa).

The stretch at 24 to 61 (RNYIHMMESNLDALQKTMEELKNGRDDLLGRVSIEEDK) forms a coiled coil. Residues 135–438 (MVAQEIIHKV…CEGFINPNRY (304 aa)) form the NB-ARC domain. 178-185 (GMGGVGKT) is a binding site for ATP. 4 LRR repeats span residues 511 to 532 (IVRTMSFTCTQIKKISCRSKCP), 533 to 555 (NLSTLLILDNRLLVKISNRFFRF), 558 to 580 (KLVVLDLSANLDLIKLPEEISNL), and 582 to 604 (SLQYLNISLTGIKSLPVGLKKLR).

The protein belongs to the disease resistance NB-LRR family.

Its function is as follows. Probable disease resistance protein. This chain is Probable disease resistance protein At5g43740, found in Arabidopsis thaliana (Mouse-ear cress).